The chain runs to 435 residues: Transmembrane protease serine 4 (435 aa).

Over 1 to 30 the chain is Cytoplasmic; sequence MESDSGQPLNNRDIVPFRKPRRPQETFKKV. Residues 31–51 form a helical; Signal-anchor for type II membrane protein membrane-spanning segment; sequence GIPIIAVLLSLIALVIVALLI. At 52-435 the chain is on the extracellular side; the sequence is KVILDKYYFI…WIYNVRKSEM (384 aa). The LDL-receptor class A domain maps to 59-101; it reads YFICGSPLTFIQRGQLCDGHLDCASGEDEEHCVKDFPEKPGVA. Intrachain disulfides connect C62–C81, C75–C90, C125–C181, C138–C191, C194–C308, C228–C244, C354–C370, and C381–C408. In terms of domain architecture, SRCR spans 102–202; that stretch reads VRLSKDRSTL…DCGKSLKTPR (101 aa). N-linked (GlcNAc...) asparagine glycosylation is found at N128 and N176. The 230-residue stretch at 203 to 432 folds into the Peptidase S1 domain; sequence VVGGVEAPVD…YLNWIYNVRK (230 aa). Residues H243 and D288 each act as charge relay system in the active site. S385 functions as the Charge relay system in the catalytic mechanism.

The protein belongs to the peptidase S1 family. Proteolytically processed; probably by an autocatalytic mechanism.

It localises to the cell membrane. Its subcellular location is the secreted. In terms of biological role, plasma membrane-anchored serine protease that directly induces processing of pro-uPA/PLAU into the active form through proteolytic activity. Seems to be capable of activating ENaC. This chain is Transmembrane protease serine 4, found in Mus musculus (Mouse).